A 287-amino-acid polypeptide reads, in one-letter code: Energy-coupling factor transporter ATP-binding protein EcfA2 (287 aa).

The ABC transporter domain occupies 3–245; the sequence is IKFENVSYVY…SEWLQKHHLA (243 aa). 40 to 47 serves as a coordination point for ATP; sequence GHTGSGKS.

Belongs to the ABC transporter superfamily. Energy-coupling factor EcfA family. Forms a stable energy-coupling factor (ECF) transporter complex composed of 2 membrane-embedded substrate-binding proteins (S component), 2 ATP-binding proteins (A component) and 2 transmembrane proteins (T component).

The protein localises to the cell membrane. Functionally, ATP-binding (A) component of a common energy-coupling factor (ECF) ABC-transporter complex. Unlike classic ABC transporters this ECF transporter provides the energy necessary to transport a number of different substrates. The protein is Energy-coupling factor transporter ATP-binding protein EcfA2 of Lactobacillus delbrueckii subsp. bulgaricus (strain ATCC 11842 / DSM 20081 / BCRC 10696 / JCM 1002 / NBRC 13953 / NCIMB 11778 / NCTC 12712 / WDCM 00102 / Lb 14).